The primary structure comprises 483 residues: Glutamyl-tRNA(Gln) amidotransferase subunit A (483 aa).

Residues Lys-77 and Ser-152 each act as charge relay system in the active site. Ser-176 functions as the Acyl-ester intermediate in the catalytic mechanism.

Belongs to the amidase family. GatA subfamily. As to quaternary structure, heterotrimer of A, B and C subunits.

It catalyses the reaction L-glutamyl-tRNA(Gln) + L-glutamine + ATP + H2O = L-glutaminyl-tRNA(Gln) + L-glutamate + ADP + phosphate + H(+). Its function is as follows. Allows the formation of correctly charged Gln-tRNA(Gln) through the transamidation of misacylated Glu-tRNA(Gln) in organisms which lack glutaminyl-tRNA synthetase. The reaction takes place in the presence of glutamine and ATP through an activated gamma-phospho-Glu-tRNA(Gln). In Listeria monocytogenes serovar 1/2a (strain ATCC BAA-679 / EGD-e), this protein is Glutamyl-tRNA(Gln) amidotransferase subunit A.